The sequence spans 187 residues: Elongation factor P (187 aa).

Belongs to the elongation factor P family.

Its subcellular location is the cytoplasm. Its pathway is protein biosynthesis; polypeptide chain elongation. Functionally, involved in peptide bond synthesis. Stimulates efficient translation and peptide-bond synthesis on native or reconstituted 70S ribosomes in vitro. Probably functions indirectly by altering the affinity of the ribosome for aminoacyl-tRNA, thus increasing their reactivity as acceptors for peptidyl transferase. This Prochlorococcus marinus (strain NATL1A) protein is Elongation factor P.